The chain runs to 112 residues: uncharacterized protein (112 aa).

The tract at residues 90–112 (KNFNNSKNDQIKKKKIDNNQVNL) is disordered.

This is an uncharacterized protein from Buchnera aphidicola subsp. Acyrthosiphon pisum (strain APS) (Acyrthosiphon pisum symbiotic bacterium).